We begin with the raw amino-acid sequence, 86 residues long: Large ribosomal subunit protein uL23 (86 aa).

The protein belongs to the universal ribosomal protein uL23 family. Part of the 50S ribosomal subunit. Contacts protein L29.

Binds to 23S rRNA. One of the proteins that surrounds the polypeptide exit tunnel on the outside of the ribosome. This chain is Large ribosomal subunit protein uL23, found in Thermococcus sibiricus (strain DSM 12597 / MM 739).